Reading from the N-terminus, the 131-residue chain is Small ribosomal subunit protein uS8 (131 aa).

This sequence belongs to the universal ribosomal protein uS8 family. As to quaternary structure, part of the 30S ribosomal subunit. Contacts proteins S5 and S12.

In terms of biological role, one of the primary rRNA binding proteins, it binds directly to 16S rRNA central domain where it helps coordinate assembly of the platform of the 30S subunit. The chain is Small ribosomal subunit protein uS8 from Solibacter usitatus (strain Ellin6076).